A 379-amino-acid polypeptide reads, in one-letter code: SUN domain-containing protein 5 (379 aa).

The disordered stretch occupies residues 1 to 45 (MPRSSRSPGDPGALLEDVAHNPRPRRIAQRGRNTSRMAEDTSPNM). Residues 1-105 (MPRSSRSPGD…LLCQKLMEKT (105 aa)) lie on the Nuclear side of the membrane. A compositionally biased stretch (polar residues) spans 31–45 (GRNTSRMAEDTSPNM). Residues 106–122 (GILLLCAFGFWMFSIHL) traverse the membrane as a helical segment. Over 123-379 (PSKMKVWQDD…PHQNPYPKRD (257 aa)) the chain is Perinuclear space. Residues 141–182 (LRLYQEKVRHHSGEIQDLRGSMNQLIAKLQEMEAMSDEQKMA) adopt a coiled-coil conformation. Residues 205-364 (GASIDFEHTS…YRVRVHGSVA (160 aa)) form the SUN domain.

As to quaternary structure, probable homotrimer. Interacts with DNAJB13. Highly glycosylated in the Golgi apparatus during spermiogenesis. As to expression, sperm (at protein level). Widely expressed. Conflictingly shown to be specifically expressed in testis.

It localises to the nucleus inner membrane. The protein localises to the golgi apparatus. Plays an essential role in anchoring sperm head to the tail. Is responsible for the attachment of the coupling apparatus to the sperm nuclear envelope. The protein is SUN domain-containing protein 5 (SUN5) of Homo sapiens (Human).